Here is a 412-residue protein sequence, read N- to C-terminus: uncharacterized protein (412 aa).

Residues 20–199 (FFYFDFDAFF…LPIVELPGIG (180 aa)) enclose the UmuC domain.

This sequence belongs to the DNA polymerase type-Y family.

This is an uncharacterized protein from Mycoplasma pneumoniae (strain ATCC 29342 / M129 / Subtype 1) (Mycoplasmoides pneumoniae).